Reading from the N-terminus, the 159-residue chain is Aphid transmission protein (159 aa).

This sequence belongs to the caulimoviridae ORF II family.

Its function is as follows. This protein is involved in virus transmission. The polypeptide is Aphid transmission protein (Arabidopsis thaliana (Mouse-ear cress)).